A 56-amino-acid polypeptide reads, in one-letter code: U4-myrmicitoxin-Tb1a (56 aa).

Positions 1–26 (MQPSYLLLTFAIIFVMVIMYSPAVEA) are cleaved as a signal peptide. A propeptide spanning residues 27–40 (KAGADADADAHADA) is cleaved from the precursor. Position 53 is a glycine amide (glycine 53).

Post-translationally, contains 1 disulfide bond. As to expression, expressed by the venom gland.

The protein localises to the secreted. Its function is as follows. Venom protein with unknown function. Does not induce paralysis when a high dose is administered by intrathoracic injection into the blowfly Lucilia caesar. The chain is U4-myrmicitoxin-Tb1a from Tetramorium bicarinatum (Tramp ant).